Consider the following 670-residue polypeptide: Protein HBS1 (670 aa).

Disordered stretches follow at residues 60-88 (KDIQEEEADEDEDEDAAFAKARRDSESFQ) and 164-202 (KTVSKTVPTPPPKISLKEPRRGFEIPSPKVPSSPVVSGR). Acidic residues predominate over residues 63-75 (QEEEADEDEDEDA). Over residues 189-200 (PSPKVPSSPVVS) the composition is skewed to low complexity. The region spanning 245–468 (KSHIHMIVIG…DVIENFKIPE (224 aa)) is the tr-type G domain. Residues 254-261 (GHVDAGKS) form a G1 region. 254 to 261 (GHVDAGKS) serves as a coordination point for GTP. The G2 stretch occupies residues 310 to 314 (GITMD). Positions 331–334 (DAPG) are G3. GTP is bound by residues 393-396 (NKLD) and 432-434 (SGL). The tract at residues 393–396 (NKLD) is G4. The segment at 432–434 (SGL) is G5.

It belongs to the TRAFAC class translation factor GTPase superfamily. Classic translation factor GTPase family. Component of the Pelota-HBS1L complex, also named Dom34-Hbs1 complex, composed of pelo and HBS1. As to expression, expressed in ovaries (at protein level).

Its subcellular location is the cytoplasm. The enzyme catalyses GTP + H2O = GDP + phosphate + H(+). In terms of biological role, GTPase component of the Pelota-HBS1L complex, a complex that recognizes stalled ribosomes and triggers the No-Go Decay (NGD) pathway. The Pelota-HBS1L complex recognizes ribosomes stalled at the 3' end of an mRNA and engages stalled ribosomes by destabilizing mRNA in the mRNA channel. Following ribosome-binding, the Pelota-HBS1L complex promotes recruitment of pix, which drives the disassembly of stalled ribosomes, followed by degradation of damaged mRNAs as part of the NGD pathway. Together with pelo, required for transposon silencing in the ovary and testis. Together with pelo, promotes meiosis and spermatid individualization during spermatogenesis. The sequence is that of Protein HBS1 from Drosophila melanogaster (Fruit fly).